The primary structure comprises 280 residues: Extracellular metalloprotease GLRG_06286 (280 aa).

A signal peptide spans Met-1 to Ala-17. Residue Asn-51 is glycosylated (N-linked (GlcNAc...) asparagine). His-196 lines the Zn(2+) pocket. The active site involves Glu-197. His-200 lines the Zn(2+) pocket. Residues Asp-217–Arg-236 are disordered. Cys-232 and Cys-259 are joined by a disulfide.

The protein belongs to the peptidase M43B family.

It localises to the secreted. Secreted metalloproteinase that allows assimilation of proteinaceous substrates. This chain is Extracellular metalloprotease GLRG_06286, found in Colletotrichum graminicola (strain M1.001 / M2 / FGSC 10212) (Maize anthracnose fungus).